Here is a 378-residue protein sequence, read N- to C-terminus: Flagellar P-ring protein 2 (378 aa).

The first 33 residues, 1–33, serve as a signal peptide directing secretion; sequence MHEVSDKTNAIHPLQRVSRALFALGLLCFAAMA.

It belongs to the FlgI family. As to quaternary structure, the basal body constitutes a major portion of the flagellar organelle and consists of four rings (L,P,S, and M) mounted on a central rod.

Its subcellular location is the periplasm. It localises to the bacterial flagellum basal body. Functionally, assembles around the rod to form the L-ring and probably protects the motor/basal body from shearing forces during rotation. This is Flagellar P-ring protein 2 from Hahella chejuensis (strain KCTC 2396).